Consider the following 315-residue polypeptide: Acetyl-coenzyme A carboxylase carboxyl transferase subunit alpha (315 aa).

The 254-residue stretch at 40 to 293 folds into the CoA carboxyltransferase C-terminal domain; that stretch reads LQDKSKTLTE…REELSSQLAM (254 aa).

This sequence belongs to the AccA family. As to quaternary structure, acetyl-CoA carboxylase is a heterohexamer composed of biotin carboxyl carrier protein (AccB), biotin carboxylase (AccC) and two subunits each of ACCase subunit alpha (AccA) and ACCase subunit beta (AccD).

The protein resides in the cytoplasm. The enzyme catalyses N(6)-carboxybiotinyl-L-lysyl-[protein] + acetyl-CoA = N(6)-biotinyl-L-lysyl-[protein] + malonyl-CoA. Its pathway is lipid metabolism; malonyl-CoA biosynthesis; malonyl-CoA from acetyl-CoA: step 1/1. Functionally, component of the acetyl coenzyme A carboxylase (ACC) complex. First, biotin carboxylase catalyzes the carboxylation of biotin on its carrier protein (BCCP) and then the CO(2) group is transferred by the carboxyltransferase to acetyl-CoA to form malonyl-CoA. The chain is Acetyl-coenzyme A carboxylase carboxyl transferase subunit alpha from Pseudomonas syringae pv. syringae (strain B728a).